We begin with the raw amino-acid sequence, 1029 residues long: Ig-like and fibronectin type-III domain-containing protein 1 (1029 aa).

An N-terminal signal peptide occupies residues Met1–Ala22. At Glu23–Ser918 the chain is on the extracellular side. Asn36, Asn93, Asn120, and Asn165 each carry an N-linked (GlcNAc...) asparagine glycan. In terms of domain architecture, Fibronectin type-III 1 spans Ala90–Thr181. The region spanning Pro185–Pro227 is the WR1 domain. N-linked (GlcNAc...) asparagine glycans are attached at residues Asn257, Asn374, Asn409, Asn442, Asn482, Asn507, and Asn552. Fibronectin type-III domains lie at Ala330–Ala417 and Ala427–Asp523. The Ig-like C2-type domain maps to Ala619–Ile710. The cysteines at positions 640 and 693 are disulfide-linked. N-linked (GlcNAc...) asparagine glycosylation is present at Asn753. Positions Ala817–Arg909 constitute a Fibronectin type-III 4 domain. The helical transmembrane segment at Ala919 to Leu939 threads the bilayer. At Ser940–Thr1029 the chain is on the cytoplasmic side. The tract at residues Ser988–Gly1021 is disordered. The segment covering Gln998–Asp1013 has biased composition (polar residues).

It is found in the cell membrane. The protein is Ig-like and fibronectin type-III domain-containing protein 1 of Caenorhabditis elegans.